The chain runs to 189 residues: Interferon alpha-8 (189 aa).

Positions Met1–Gly23 are cleaved as a signal peptide. 2 disulfide bridges follow: Cys24–Cys122 and Cys52–Cys162.

It belongs to the alpha/beta interferon family.

Its subcellular location is the secreted. Functionally, produced by macrophages, IFN-alpha have antiviral activities. Interferon stimulates the production of two enzymes: a protein kinase and an oligoadenylate synthetase. This chain is Interferon alpha-8 (IFNA8), found in Homo sapiens (Human).